Consider the following 146-residue polypeptide: uncharacterized protein (146 aa).

The segment at 87–121 (SRSHHSTAKSAKSALSSDSGDGSDPDPEPETFPSA) is disordered. Positions 94 to 106 (AKSAKSALSSDSG) are enriched in low complexity.

This is an uncharacterized protein from Escherichia coli (strain K12).